The primary structure comprises 213 residues: Sclerostin (213 aa).

Residues 1 to 23 (MQLPLALCLVCLLVHAAFRVVEG) form the signal peptide. Residues 41 to 71 (GEYPEPPPELENNKTMNRAENGGRPPHHPFE) form a disordered region. An N-linked (GlcNAc...) asparagine glycan is attached at asparagine 53. 4 disulfides stabilise this stretch: cysteine 80–cysteine 134, cysteine 94–cysteine 148, cysteine 105–cysteine 165, and cysteine 109–cysteine 167. The CTCK domain occupies 82-172 (ELHFTRYVTD…ASCKCKRLTR (91 aa)). The N-linked (GlcNAc...) asparagine glycan is linked to asparagine 175. A disordered region spans residues 178–213 (ELKDFGPEAARPQKGRKPRPRARGAKANQAELENAY). Over residues 190–201 (QKGRKPRPRARG) the composition is skewed to basic residues.

Belongs to the sclerostin family. In terms of assembly, interacts with LRP4 (via the extracellular domain); the interaction facilitates the inhibition of Wnt signaling. Interacts with LRP5 (via the first two YWTD-EGF repeat domains); the interaction inhibits Wnt-mediated signaling. Interacts with LRP6.

It localises to the secreted. It is found in the extracellular space. Its subcellular location is the extracellular matrix. Functionally, negative regulator of bone growth that acts through inhibition of Wnt signaling and bone formation. This Chlorocebus aethiops (Green monkey) protein is Sclerostin.